A 168-amino-acid chain; its full sequence is Nicotinamide-nucleotide adenylyltransferase (168 aa).

Residues Arg8, Phe9, His13, His16, Phe119, Arg121, Tyr124, Gly126, Thr127, and Arg130 each coordinate ATP.

The protein belongs to the archaeal NMN adenylyltransferase family. Homohexamer existing as a trimer of dimers.

It localises to the cytoplasm. It catalyses the reaction beta-nicotinamide D-ribonucleotide + ATP + H(+) = diphosphate + NAD(+). It functions in the pathway cofactor biosynthesis; NAD(+) biosynthesis; NAD(+) from nicotinamide D-ribonucleotide: step 1/1. In terms of biological role, catalyzes the formation of NAD(+) from nicotinamide mononucleotide (NMN) and ATP. This is Nicotinamide-nucleotide adenylyltransferase from Methanocaldococcus jannaschii (strain ATCC 43067 / DSM 2661 / JAL-1 / JCM 10045 / NBRC 100440) (Methanococcus jannaschii).